We begin with the raw amino-acid sequence, 104 residues long: Small ribosomal subunit protein bS16 (104 aa).

The protein belongs to the bacterial ribosomal protein bS16 family.

This is Small ribosomal subunit protein bS16 from Wolbachia pipientis subsp. Culex pipiens (strain wPip).